The sequence spans 448 residues: Probable glycine dehydrogenase (decarboxylating) subunit 1 (448 aa).

This sequence belongs to the GcvP family. N-terminal subunit subfamily. The glycine cleavage system is composed of four proteins: P, T, L and H. In this organism, the P 'protein' is a heterodimer of two subunits.

The enzyme catalyses N(6)-[(R)-lipoyl]-L-lysyl-[glycine-cleavage complex H protein] + glycine + H(+) = N(6)-[(R)-S(8)-aminomethyldihydrolipoyl]-L-lysyl-[glycine-cleavage complex H protein] + CO2. Functionally, the glycine cleavage system catalyzes the degradation of glycine. The P protein binds the alpha-amino group of glycine through its pyridoxal phosphate cofactor; CO(2) is released and the remaining methylamine moiety is then transferred to the lipoamide cofactor of the H protein. This Caulobacter vibrioides (strain ATCC 19089 / CIP 103742 / CB 15) (Caulobacter crescentus) protein is Probable glycine dehydrogenase (decarboxylating) subunit 1.